Here is a 315-residue protein sequence, read N- to C-terminus: Glutamine synthetase nodule isozyme (315 aa).

The region spanning 19–99 (IIAEYIWVGG…VICDTYTPSG (81 aa)) is the GS beta-grasp domain. The 210-residue stretch at 106 to 315 (KRHAAAKIFS…WGVANRGASI (210 aa)) folds into the GS catalytic domain.

Belongs to the glutamine synthetase family. Homooctamer.

Its subcellular location is the cytoplasm. The enzyme catalyses L-glutamate + NH4(+) + ATP = L-glutamine + ADP + phosphate + H(+). This is Glutamine synthetase nodule isozyme from Lupinus angustifolius (Narrow-leaved blue lupine).